The primary structure comprises 170 residues: Negative modulator of initiation of replication (170 aa).

The interaction with DNA stretch occupies residues 139-145; sequence NTNTGRK.

This sequence belongs to the SeqA family. As to quaternary structure, homodimer. Polymerizes to form helical filaments.

Its subcellular location is the cytoplasm. Functionally, negative regulator of replication initiation, which contributes to regulation of DNA replication and ensures that replication initiation occurs exactly once per chromosome per cell cycle. Binds to pairs of hemimethylated GATC sequences in the oriC region, thus preventing assembly of replication proteins and re-initiation at newly replicated origins. Repression is relieved when the region becomes fully methylated. This Tolumonas auensis (strain DSM 9187 / NBRC 110442 / TA 4) protein is Negative modulator of initiation of replication.